The chain runs to 316 residues: MFFYKIIYFIGFPYIVLRLIVSIILPIASLYFIYCNFIAPKLREKPESSYKNKVVIITGASSGIGAELAKKYARLGCKVTIVARRLDQLEKVKSSFLKDYSRVNDDDILVIKGDLTLIDDCKNMVEKVIEKWSKIDICVWNAGSGSLIEFSKLQGDISIYRDNMELNYFSLVNCTHLVYKYLEQSHGSIIVISSLAGKFGTALRTSYSSSKHAVMGFFNSLRNETKNIQITIVCPGFILTEFHDNLKTLDGKQVERNKGNFMTASQCANEIILAERQGIRELIQTAKGRVGNYLQAIFPELIEFLTHKFASSSVKK.

The Cytoplasmic segment spans residues 1–18 (MFFYKIIYFIGFPYIVLR). Residues 19-39 (LIVSIILPIASLYFIYCNFIA) form a helical; Signal-anchor for type II membrane protein membrane-spanning segment. The Peroxisomal portion of the chain corresponds to 40 to 316 (PKLREKPESS…HKFASSSVKK (277 aa)). NAD(+) is bound at residue 56–80 (IITGASSGIGAELAKKYARLGCKVT). Position 194 (serine 194) interacts with substrate. Residue tyrosine 207 is the Proton acceptor of the active site.

This sequence belongs to the short-chain dehydrogenases/reductases (SDR) family.

The protein localises to the peroxisome membrane. Putative oxidoreductase. This Dictyostelium discoideum (Social amoeba) protein is Dehydrogenase/reductase SDR family protein 7-like.